The sequence spans 102 residues: Pyrimidine/purine nucleoside phosphorylase (102 aa).

It belongs to the nucleoside phosphorylase PpnP family.

It catalyses the reaction a purine D-ribonucleoside + phosphate = a purine nucleobase + alpha-D-ribose 1-phosphate. The catalysed reaction is adenosine + phosphate = alpha-D-ribose 1-phosphate + adenine. The enzyme catalyses cytidine + phosphate = cytosine + alpha-D-ribose 1-phosphate. It carries out the reaction guanosine + phosphate = alpha-D-ribose 1-phosphate + guanine. It catalyses the reaction inosine + phosphate = alpha-D-ribose 1-phosphate + hypoxanthine. The catalysed reaction is thymidine + phosphate = 2-deoxy-alpha-D-ribose 1-phosphate + thymine. The enzyme catalyses uridine + phosphate = alpha-D-ribose 1-phosphate + uracil. It carries out the reaction xanthosine + phosphate = alpha-D-ribose 1-phosphate + xanthine. Its function is as follows. Catalyzes the phosphorolysis of diverse nucleosides, yielding D-ribose 1-phosphate and the respective free bases. Can use uridine, adenosine, guanosine, cytidine, thymidine, inosine and xanthosine as substrates. Also catalyzes the reverse reactions. This Shewanella amazonensis (strain ATCC BAA-1098 / SB2B) protein is Pyrimidine/purine nucleoside phosphorylase.